A 159-amino-acid polypeptide reads, in one-letter code: Mitotic-spindle organizing protein 2 (159 aa).

The interval 87-159 is disordered; sequence LASDPQDSVP…SGKSNSRSSP (73 aa). Over residues 91 to 105 the composition is skewed to polar residues; that stretch reads PQDSVPISLSTSTSE. Omega-N-methylarginine is present on R111. Phosphoserine is present on S153.

The protein belongs to the MOZART2 family. As to quaternary structure, associates with the gamma-tubulin ring complex (gTuRC) consisting of TUBGCP2, TUBGCP3, TUBGCP4, TUBGCP5 and TUBGCP6 and gamma-tubulin TUBG1 or TUBG2; within the complex, interacts with TUBGCP2; the interaction plays a role in gTuRC activation.

Its subcellular location is the cytoplasm. It localises to the cytoskeleton. It is found in the microtubule organizing center. The protein resides in the centrosome. The protein localises to the spindle. Its function is as follows. Required for the recruitment and the assembly of the gamma-tubulin ring complex (gTuRC) at the centrosome. The gTuRC regulates the minus-end nucleation of alpha-beta tubulin heterodimers that grow into microtubule protafilaments, a critical step in centrosome duplication and spindle formation. This is Mitotic-spindle organizing protein 2 (Mzt2) from Mus musculus (Mouse).